Here is a 252-residue protein sequence, read N- to C-terminus: F-box protein At5g39250 (252 aa).

In terms of domain architecture, F-box spans 1–42; sequence MFSEEVLKNVFPLLEGEDLASCMGVCKQWRDIARDDFYWKCQ.

This is F-box protein At5g39250 from Arabidopsis thaliana (Mouse-ear cress).